We begin with the raw amino-acid sequence, 427 residues long: Enolase (427 aa).

Position 163 (glutamine 163) interacts with (2R)-2-phosphoglycerate. The active-site Proton donor is glutamate 205. Mg(2+)-binding residues include aspartate 242, glutamate 285, and aspartate 312. (2R)-2-phosphoglycerate contacts are provided by lysine 337, arginine 366, serine 367, and lysine 388. The active-site Proton acceptor is lysine 337.

This sequence belongs to the enolase family. Requires Mg(2+) as cofactor.

The protein resides in the cytoplasm. Its subcellular location is the secreted. The protein localises to the cell surface. The catalysed reaction is (2R)-2-phosphoglycerate = phosphoenolpyruvate + H2O. The protein operates within carbohydrate degradation; glycolysis; pyruvate from D-glyceraldehyde 3-phosphate: step 4/5. In terms of biological role, catalyzes the reversible conversion of 2-phosphoglycerate (2-PG) into phosphoenolpyruvate (PEP). It is essential for the degradation of carbohydrates via glycolysis. The protein is Enolase of Rhodopseudomonas palustris (strain BisB5).